The primary structure comprises 887 residues: Centrobin (887 aa).

The interval 1–34 (MATAAPSPSSPLRPEDLLSDSSEPPGLNQVSSEV) is disordered. Serine 81 bears the Phosphoserine mark. Disordered regions lie at residues 110 to 153 (MLHT…PSSS), 465 to 486 (SLRQ…LSGQ), 566 to 591 (TLLP…EKGE), and 636 to 695 (LGPP…LPPA). The span at 113–128 (TSRDTAYRTGSERREE) shows a compositional bias: basic and acidic residues. Positions 133–153 (SDSTATLLNTRPLQDLSPSSS) are enriched in polar residues. The stretch at 191–557 (RRKHCERHIQ…LQAMLQAHWE (367 aa)) forms a coiled coil. Positions 360 to 887 (QEHQLKERLQ…SMRSRGGIWR (528 aa)) are required for centrosome localization. A compositionally biased stretch (basic and acidic residues) spans 670 to 680 (TDDHRAERPFP). A Phosphoserine modification is found at serine 782. Residues 824-887 (GTDGQGELVP…SMRSRGGIWR (64 aa)) are disordered. The segment covering 832–849 (VPRRNTDSRLGETTRKEI) has biased composition (basic and acidic residues).

As to quaternary structure, interacts with LYST.

Its subcellular location is the cytoplasm. The protein localises to the cytoskeleton. It is found in the microtubule organizing center. The protein resides in the centrosome. It localises to the centriole. In terms of biological role, required for centriole duplication. Inhibition of centriole duplication leading to defects in cytokinesis. The chain is Centrobin (Cntrob) from Mus musculus (Mouse).